We begin with the raw amino-acid sequence, 270 residues long: 4-hydroxy-tetrahydrodipicolinate reductase (270 aa).

NAD(+)-binding positions include 9–14 (GAGGRM) and Glu35. Residue Arg36 participates in NADP(+) binding. NAD(+) contacts are provided by residues 99 to 101 (GTT) and 123 to 126 (ASNY). His156 acts as the Proton donor/acceptor in catalysis. His157 is a binding site for (S)-2,3,4,5-tetrahydrodipicolinate. The active-site Proton donor is Lys160. 166–167 (GT) is a (S)-2,3,4,5-tetrahydrodipicolinate binding site.

This sequence belongs to the DapB family.

It is found in the cytoplasm. It carries out the reaction (S)-2,3,4,5-tetrahydrodipicolinate + NAD(+) + H2O = (2S,4S)-4-hydroxy-2,3,4,5-tetrahydrodipicolinate + NADH + H(+). The catalysed reaction is (S)-2,3,4,5-tetrahydrodipicolinate + NADP(+) + H2O = (2S,4S)-4-hydroxy-2,3,4,5-tetrahydrodipicolinate + NADPH + H(+). The protein operates within amino-acid biosynthesis; L-lysine biosynthesis via DAP pathway; (S)-tetrahydrodipicolinate from L-aspartate: step 4/4. Catalyzes the conversion of 4-hydroxy-tetrahydrodipicolinate (HTPA) to tetrahydrodipicolinate. The sequence is that of 4-hydroxy-tetrahydrodipicolinate reductase from Actinobacillus succinogenes (strain ATCC 55618 / DSM 22257 / CCUG 43843 / 130Z).